The following is a 207-amino-acid chain: Interleukin-6 (207 aa).

A signal peptide spans 1–20 (MNSLSTSAFSLGLLLVMATA). Cys67 and Cys73 are joined by a disulfide. Residue Ser76 is modified to Phosphoserine. Cys96 and Cys106 form a disulfide bridge.

It belongs to the IL-6 superfamily. As to quaternary structure, component of a hexamer of two molecules each of IL6, IL6R and IL6ST; first binds to IL6R to associate with the signaling subunit IL6ST. Interacts with IL6R (via the N-terminal ectodomain); this interaction may be affected by IL6R-binding with SORL1, hence decreasing IL6 cis signaling. Interacts with SORL1 (via the N-terminal ectodomain); this interaction leads to IL6 internalization and lysosomal degradation. May form a trimeric complex with the soluble SORL1 ectodomain and soluble IL6R receptor; this interaction might stabilize circulating IL6, hence promoting IL6 trans signaling.

It is found in the secreted. Cytokine with a wide variety of biological functions in immunity, tissue regeneration, and metabolism. Binds to IL6R, then the complex associates to the signaling subunit IL6ST/gp130 to trigger the intracellular IL6-signaling pathway. The interaction with the membrane-bound IL6R and IL6ST stimulates 'classic signaling', whereas the binding of IL6 and soluble IL6R to IL6ST stimulates 'trans-signaling'. Alternatively, 'cluster signaling' occurs when membrane-bound IL6:IL6R complexes on transmitter cells activate IL6ST receptors on neighboring receiver cells. Functionally, IL6 is a potent inducer of the acute phase response. Rapid production of IL6 contributes to host defense during infection and tissue injury, but excessive IL6 synthesis is involved in disease pathology. In the innate immune response, is synthesized by myeloid cells, such as macrophages and dendritic cells, upon recognition of pathogens through toll-like receptors (TLRs) at the site of infection or tissue injury. In the adaptive immune response, is required for the differentiation of B cells into immunoglobulin-secreting cells. Plays a major role in the differentiation of CD4(+) T cell subsets. Essential factor for the development of T follicular helper (Tfh) cells that are required for the induction of germinal-center formation. Required to drive naive CD4(+) T cells to the Th17 lineage. Also required for proliferation of myeloma cells and the survival of plasmablast cells. In terms of biological role, acts as an essential factor in bone homeostasis and on vessels directly or indirectly by induction of VEGF, resulting in increased angiogenesis activity and vascular permeability. Induces, through 'trans-signaling' and synergistically with IL1B and TNF, the production of VEGF. Involved in metabolic controls, is discharged into the bloodstream after muscle contraction increasing lipolysis and improving insulin resistance. 'Trans-signaling' in central nervous system also regulates energy and glucose homeostasis. Mediates, through GLP-1, crosstalk between insulin-sensitive tissues, intestinal L cells and pancreatic islets to adapt to changes in insulin demand. Also acts as a myokine. Plays a protective role during liver injury, being required for maintenance of tissue regeneration. Also has a pivotal role in iron metabolism by regulating HAMP/hepcidin expression upon inflammation or bacterial infection. Through activation of IL6ST-YAP-NOTCH pathway, induces inflammation-induced epithelial regeneration. This Vulpes vulpes (Red fox) protein is Interleukin-6 (IL6).